The chain runs to 126 residues: UPF0344 protein ABC2900 (126 aa).

4 consecutive transmembrane segments (helical) span residues 16 to 36, 43 to 63, 66 to 86, and 104 to 124; these read ASHE…YFLF, AGTI…VTGA, LIAY…VLLI, and GMLF…YGII.

Belongs to the UPF0344 family.

It is found in the cell membrane. In Shouchella clausii (strain KSM-K16) (Alkalihalobacillus clausii), this protein is UPF0344 protein ABC2900.